Reading from the N-terminus, the 235-residue chain is Ribonuclease 3 (235 aa).

The RNase III domain maps to 8-137 (PAELARRIGI…VIGAIFLSGG (130 aa)). Glu50 lines the Mg(2+) pocket. Residue Asp54 is part of the active site. Positions 123 and 126 each coordinate Mg(2+). Glu126 is a catalytic residue. Residues 163–232 (DNKTAFQEWV…AGRAMREWAG (70 aa)) form the DRBM domain. The segment at 211–235 (QGRTKKEAEQQAAGRAMREWAGRKG) is disordered. Residues 226–235 (AMREWAGRKG) show a composition bias toward basic and acidic residues.

The protein belongs to the ribonuclease III family. Homodimer. Requires Mg(2+) as cofactor.

It localises to the cytoplasm. It catalyses the reaction Endonucleolytic cleavage to 5'-phosphomonoester.. Functionally, digests double-stranded RNA. Involved in the processing of primary rRNA transcript to yield the immediate precursors to the large and small rRNAs (23S and 16S). Processes some mRNAs, and tRNAs when they are encoded in the rRNA operon. Processes pre-crRNA and tracrRNA of type II CRISPR loci if present in the organism. The protein is Ribonuclease 3 of Heliobacterium modesticaldum (strain ATCC 51547 / Ice1).